A 334-amino-acid polypeptide reads, in one-letter code: S-adenosylmethionine:tRNA ribosyltransferase-isomerase (334 aa).

Belongs to the QueA family. As to quaternary structure, monomer.

The protein localises to the cytoplasm. The catalysed reaction is 7-aminomethyl-7-carbaguanosine(34) in tRNA + S-adenosyl-L-methionine = epoxyqueuosine(34) in tRNA + adenine + L-methionine + 2 H(+). It functions in the pathway tRNA modification; tRNA-queuosine biosynthesis. Transfers and isomerizes the ribose moiety from AdoMet to the 7-aminomethyl group of 7-deazaguanine (preQ1-tRNA) to give epoxyqueuosine (oQ-tRNA). The protein is S-adenosylmethionine:tRNA ribosyltransferase-isomerase of Thermosipho melanesiensis (strain DSM 12029 / CIP 104789 / BI429).